The following is a 322-amino-acid chain: p55-v-Fos-transforming protein (322 aa).

Residues 69–95 (APGGRGQSIGRRGKVEQLSPEEEEKRR) form a disordered region. The 64-residue stretch at 91 to 154 (EEKRRIRRER…EKLEFILAAH (64 aa)) folds into the bZIP domain. The basic motif stretch occupies residues 93–113 (KRRIRRERNKMAAAKCRNRRR). Residues 119 to 147 (LQAETDQLEEEKSALQAEIANLLKEKEKL) form a leucine-zipper region. Positions 298 to 322 (AAHRKGSSSNEPSSDSLSSPTLLAL) are disordered. Over residues 304–316 (SSSNEPSSDSLSS) the composition is skewed to low complexity.

The protein belongs to the bZIP family. Fos subfamily.

The protein resides in the host nucleus. The chain is p55-v-Fos-transforming protein (V-FOS) from Galliformes.